A 549-amino-acid chain; its full sequence is Peptide transport periplasmic protein SapA (549 aa).

Positions 1–21 (MRLVLSSLIVIAGLLSSQATA) are cleaved as a signal peptide.

This sequence belongs to the bacterial solute-binding protein 5 family.

The protein resides in the periplasm. In terms of biological role, involved in a peptide intake transport system that plays a role in the resistance to antimicrobial peptides. The protein is Peptide transport periplasmic protein SapA of Salmonella typhimurium (strain LT2 / SGSC1412 / ATCC 700720).